The primary structure comprises 188 residues: Elongation factor P-like protein (188 aa).

This sequence belongs to the elongation factor P family.

The polypeptide is Elongation factor P-like protein (Xanthomonas axonopodis pv. citri (strain 306)).